Reading from the N-terminus, the 323-residue chain is Acetyl-coenzyme A carboxylase carboxyl transferase subunit alpha (323 aa).

Residues 39–293 form the CoA carboxyltransferase C-terminal domain; it reads RLSKKSQQLT…RRALGDSLRQ (255 aa).

It belongs to the AccA family. As to quaternary structure, acetyl-CoA carboxylase is a heterohexamer composed of biotin carboxyl carrier protein (AccB), biotin carboxylase (AccC) and two subunits each of ACCase subunit alpha (AccA) and ACCase subunit beta (AccD).

It localises to the cytoplasm. The catalysed reaction is N(6)-carboxybiotinyl-L-lysyl-[protein] + acetyl-CoA = N(6)-biotinyl-L-lysyl-[protein] + malonyl-CoA. The protein operates within lipid metabolism; malonyl-CoA biosynthesis; malonyl-CoA from acetyl-CoA: step 1/1. Component of the acetyl coenzyme A carboxylase (ACC) complex. First, biotin carboxylase catalyzes the carboxylation of biotin on its carrier protein (BCCP) and then the CO(2) group is transferred by the carboxyltransferase to acetyl-CoA to form malonyl-CoA. This Burkholderia pseudomallei (strain 1106a) protein is Acetyl-coenzyme A carboxylase carboxyl transferase subunit alpha.